The sequence spans 698 residues: Elongation factor G (698 aa).

One can recognise a tr-type G domain in the interval 11–291; the sequence is THFRNIGIAA…AVVDYLPSPL (281 aa). Residues 20 to 27, 90 to 94, and 144 to 147 contribute to the GTP site; these read AHIDAGKT, DTPGH, and NKMD.

Belongs to the TRAFAC class translation factor GTPase superfamily. Classic translation factor GTPase family. EF-G/EF-2 subfamily.

It is found in the cytoplasm. Catalyzes the GTP-dependent ribosomal translocation step during translation elongation. During this step, the ribosome changes from the pre-translocational (PRE) to the post-translocational (POST) state as the newly formed A-site-bound peptidyl-tRNA and P-site-bound deacylated tRNA move to the P and E sites, respectively. Catalyzes the coordinated movement of the two tRNA molecules, the mRNA and conformational changes in the ribosome. The protein is Elongation factor G of Deinococcus radiodurans (strain ATCC 13939 / DSM 20539 / JCM 16871 / CCUG 27074 / LMG 4051 / NBRC 15346 / NCIMB 9279 / VKM B-1422 / R1).